The sequence spans 509 residues: Cytochrome P450 monooxygenase hepC (509 aa).

A helical transmembrane segment spans residues 5–25 (MIIPSFWTGTAIIGLVACAYV). Cysteine 454 contributes to the heme binding site. Residue asparagine 491 is glycosylated (N-linked (GlcNAc...) asparagine).

This sequence belongs to the cytochrome P450 family. Heme serves as cofactor.

The protein localises to the membrane. It functions in the pathway secondary metabolite biosynthesis. Its function is as follows. Cytochrome P450 monooxygenase; part of the gene cluster that mediates the biosynthesis of heptelidic acid (HA), a sesquiterpene lactone that acts as an inhibitor of glyceraldehyde-3-phosphatedehydrogenase (GAPDH) and a growth inhibitor of the salt-tolerant lactic acid bacteria in soy sauce brewing. The chain is Cytochrome P450 monooxygenase hepC from Aspergillus oryzae (strain ATCC 42149 / RIB 40) (Yellow koji mold).